Reading from the N-terminus, the 263-residue chain is (R)-S-adenosyl-L-methionine hydrolase (263 aa).

Residues aspartate 18, aspartate 82, and asparagine 181 each contribute to the adenosine site. Residues asparagine 181, tyrosine 221, serine 234, glutamate 239, and methionine 244 each coordinate (R)-S-adenosyl-L-methionine.

This sequence belongs to the SAM hydrolase / SAM-dependent halogenase family. Homotrimer.

It catalyses the reaction (R)-S-adenosyl-L-methionine + H2O = adenosine + L-methionine + H(+). Its function is as follows. Catalyzes the hydrolysis of S-adenosyl-L-methionine (SAM) into adenosine and L-methionine. Does not have chlorinase or fluorinase activity. In Methanocaldococcus jannaschii (strain ATCC 43067 / DSM 2661 / JAL-1 / JCM 10045 / NBRC 100440) (Methanococcus jannaschii), this protein is (R)-S-adenosyl-L-methionine hydrolase.